The primary structure comprises 534 residues: MKLLAVRRLLRIQRVVIRYRLDDLLFDLPLPWFLLALRFALPWRWFPRKPLDLSRGARLRLALQDLGPIFIKFGQILSTRRDLLPEDIADELMLLQDRVPPFDSQKSVALIEAQLGKKISDVFSRFDIEPLASASVAQVHAAKLKTGEEVVVKVIRPGLKPIIAQDLAWLFILARAAEKLSADARLLHPVDVVSDYEKTIYDELDLLREAANASQLKRNFEGSPLLYVPQVYWDWCRPKVLVMERIYGIQVTDLATLADQRTDMKMLAERGVEIFFTQVFRDSFFHADMHPGNIFVSTVQPWSPQYIAIDCGIVGSLTPEDQDYLARNLFAFFKRDYRRVAQLHIDSGWVPAETKLNEFEAAIRTVCEPIFEKPLKDISFGQVLMRLFQTARRFNMEVQPQLVLLQKTLLNIEGLGRQLYPDLDLWNTAQPFLERWMRERVSPKAVLGNIHSQIEQLPHLANMTRDLLERMSQPHAADPPAPWHKRKDDWFLRLLGTAHLGGGAVLAAGGPLHELGHWPAGIMIAVGLYLIVRR.

A helical membrane pass occupies residues 23-43 (DLLFDLPLPWFLLALRFALPW). One can recognise a Protein kinase domain in the interval 125–492 (RFDIEPLASA…WHKRKDDWFL (368 aa)). ATP is bound by residues 131–139 (LASASVAQV) and K153. The Proton acceptor role is filled by D288. The next 2 membrane-spanning stretches (helical) occupy residues 490 to 510 (WFLR…AAGG) and 512 to 532 (LHEL…YLIV).

This sequence belongs to the ABC1 family. UbiB subfamily.

The protein localises to the cell inner membrane. Its pathway is cofactor biosynthesis; ubiquinone biosynthesis [regulation]. In terms of biological role, is probably a protein kinase regulator of UbiI activity which is involved in aerobic coenzyme Q (ubiquinone) biosynthesis. The chain is Probable protein kinase UbiB from Pseudomonas fluorescens (strain ATCC BAA-477 / NRRL B-23932 / Pf-5).